The sequence spans 311 residues: Bifunctional protein FolD (311 aa).

Residue 174-176 (GKG) coordinates NADP(+).

It belongs to the tetrahydrofolate dehydrogenase/cyclohydrolase family. In terms of assembly, homodimer.

The enzyme catalyses (6R)-5,10-methylene-5,6,7,8-tetrahydrofolate + NADP(+) = (6R)-5,10-methenyltetrahydrofolate + NADPH. The catalysed reaction is (6R)-5,10-methenyltetrahydrofolate + H2O = (6R)-10-formyltetrahydrofolate + H(+). Its pathway is one-carbon metabolism; tetrahydrofolate interconversion. In terms of biological role, catalyzes the oxidation of 5,10-methylenetetrahydrofolate to 5,10-methenyltetrahydrofolate and then the hydrolysis of 5,10-methenyltetrahydrofolate to 10-formyltetrahydrofolate. The sequence is that of Bifunctional protein FolD from Pyrobaculum islandicum (strain DSM 4184 / JCM 9189 / GEO3).